A 295-amino-acid polypeptide reads, in one-letter code: Indole-3-glycerol phosphate synthase (295 aa).

This sequence belongs to the TrpC family.

The catalysed reaction is 1-(2-carboxyphenylamino)-1-deoxy-D-ribulose 5-phosphate + H(+) = (1S,2R)-1-C-(indol-3-yl)glycerol 3-phosphate + CO2 + H2O. It participates in amino-acid biosynthesis; L-tryptophan biosynthesis; L-tryptophan from chorismate: step 4/5. The sequence is that of Indole-3-glycerol phosphate synthase from Prochlorococcus marinus (strain MIT 9301).